The following is a 185-amino-acid chain: Large ribosomal subunit protein uL5 (185 aa).

It belongs to the universal ribosomal protein uL5 family. In terms of assembly, part of the 50S ribosomal subunit; part of the 5S rRNA/L5/L18/L25 subcomplex. Contacts the 5S rRNA and the P site tRNA. Forms a bridge to the 30S subunit in the 70S ribosome.

This is one of the proteins that bind and probably mediate the attachment of the 5S RNA into the large ribosomal subunit, where it forms part of the central protuberance. In the 70S ribosome it contacts protein S13 of the 30S subunit (bridge B1b), connecting the 2 subunits; this bridge is implicated in subunit movement. Contacts the P site tRNA; the 5S rRNA and some of its associated proteins might help stabilize positioning of ribosome-bound tRNAs. This is Large ribosomal subunit protein uL5 from Bartonella quintana (strain Toulouse) (Rochalimaea quintana).